Here is a 185-residue protein sequence, read N- to C-terminus: Ribonuclease HII (185 aa).

Positions 1 to 185 constitute an RNase H type-2 domain; that stretch reads MIILGIDEAG…KSYKPIQLLL (185 aa). Aspartate 7, glutamate 8, and aspartate 99 together coordinate a divalent metal cation.

The protein belongs to the RNase HII family. Mn(2+) is required as a cofactor. It depends on Mg(2+) as a cofactor.

It localises to the cytoplasm. It carries out the reaction Endonucleolytic cleavage to 5'-phosphomonoester.. In terms of biological role, endonuclease that specifically degrades the RNA of RNA-DNA hybrids. The sequence is that of Ribonuclease HII from Francisella philomiragia subsp. philomiragia (strain ATCC 25017 / CCUG 19701 / FSC 153 / O#319-036).